Consider the following 249-residue polypeptide: BPI fold-containing family A member 2 (249 aa).

The signal sequence occupies residues 1 to 18 (MLQLWKLVLLCGVLTGTS). N-linked (GlcNAc...) asparagine glycosylation is found at N124 and N132. A disulfide bridge links C174 with C217.

This sequence belongs to the BPI/LBP/Plunc superfamily. Plunc family. As to expression, detected in submandibular gland. Secreted into saliva.

It localises to the secreted. Has strong antibacterial activity against P.aeruginosa. The chain is BPI fold-containing family A member 2 (BPIFA2) from Homo sapiens (Human).